Consider the following 678-residue polypeptide: DNA ligase (678 aa).

NAD(+) contacts are provided by residues 47–51 (DSDYD), 96–97 (SL), and Glu122. Lys124 serves as the catalytic N6-AMP-lysine intermediate. NAD(+) contacts are provided by Arg145, Glu182, Lys300, and Lys324. Residues Cys418, Cys421, Cys436, and Cys442 each contribute to the Zn(2+) site. The BRCT domain occupies 602–678 (AYNESFTGKT…ILEDNLKDLL (77 aa)).

It belongs to the NAD-dependent DNA ligase family. LigA subfamily. The cofactor is Mg(2+). Mn(2+) serves as cofactor.

It catalyses the reaction NAD(+) + (deoxyribonucleotide)n-3'-hydroxyl + 5'-phospho-(deoxyribonucleotide)m = (deoxyribonucleotide)n+m + AMP + beta-nicotinamide D-nucleotide.. In terms of biological role, DNA ligase that catalyzes the formation of phosphodiester linkages between 5'-phosphoryl and 3'-hydroxyl groups in double-stranded DNA using NAD as a coenzyme and as the energy source for the reaction. It is essential for DNA replication and repair of damaged DNA. The protein is DNA ligase of Francisella tularensis subsp. tularensis (strain SCHU S4 / Schu 4).